A 357-amino-acid polypeptide reads, in one-letter code: Major outer membrane protein P.IB (357 aa).

Positions 1–19 are cleaved as a signal peptide; sequence MKKSLIALTLAALPVAAMA.

It belongs to the Gram-negative porin family. In terms of assembly, homotrimer.

It is found in the cell outer membrane. Its function is as follows. Serves as a slightly cation selective porin. The protein is Major outer membrane protein P.IB (por) of Neisseria sicca.